Here is a 372-residue protein sequence, read N- to C-terminus: Putative glutamate--cysteine ligase 2 (372 aa).

Belongs to the glutamate--cysteine ligase type 2 family. YbdK subfamily. Homodimer.

The enzyme catalyses L-cysteine + L-glutamate + ATP = gamma-L-glutamyl-L-cysteine + ADP + phosphate + H(+). Its function is as follows. ATP-dependent carboxylate-amine ligase which exhibits weak glutamate--cysteine ligase activity. The polypeptide is Putative glutamate--cysteine ligase 2 (ybdK) (Salmonella typhimurium (strain LT2 / SGSC1412 / ATCC 700720)).